Consider the following 215-residue polypeptide: Thymidylate kinase (215 aa).

7–14 (GLDGSGKT) is an ATP binding site.

This sequence belongs to the thymidylate kinase family.

It catalyses the reaction dTMP + ATP = dTDP + ADP. Its function is as follows. Phosphorylation of dTMP to form dTDP in both de novo and salvage pathways of dTTP synthesis. The protein is Thymidylate kinase of Mycoplasmopsis agalactiae (strain NCTC 10123 / CIP 59.7 / PG2) (Mycoplasma agalactiae).